Reading from the N-terminus, the 402-residue chain is Caspase-1 (402 aa).

Residues methionine 1–serine 91 enclose the CARD domain. Residues methionine 1–glutamine 118 constitute a propeptide that is removed on maturation. Positions phenylalanine 98–phenylalanine 125 are disordered. The segment covering glutamate 113–glycine 123 has biased composition (basic and acidic residues). Active-site residues include histidine 236 and cysteine 284. Positions serine 297 to aspartate 314 are excised as a propeptide. Phosphoserine is present on serine 301. Position 343 is an omega-N-methylarginine (arginine 343).

The protein belongs to the peptidase C14A family. As to quaternary structure, heterotetramer that consists of two anti-parallel arranged heterodimers, each one formed by a 20 kDa (Caspase-1 subunit p20) and a 10 kDa (Caspase-1 subunit p10) subunit. May be a component of the inflammasome, a protein complex which also includes PYCARD, CARD8 and NLRP2 and whose function would be the activation of pro-inflammatory caspases. Component of the AIM2 PANoptosome complex, a multiprotein complex that drives inflammatory cell death (PANoptosis). Both the p10 and p20 subunits interact with MEFV. Interacts with CARD17P/INCA and CARD18. Interacts with SERPINB1; this interaction regulates CASP1 activity. In terms of assembly, heterotetramer that consists of two anti-parallel arranged heterodimers, each one formed by a 20 kDa (Caspase-1 subunit p20) and a 10 kDa (Caspase-1 subunit p10) subunit. Post-translationally, the two subunits are derived from the precursor sequence by an autocatalytic mechanism. In terms of processing, ubiquitinated via 'Lys-11'-linked polyubiquitination. Deubiquitinated by USP8. In terms of tissue distribution, high level expression seen in spleen and lung, low level expression seen in brain, heart, liver, kidney, testis and skeletal muscle.

Its subcellular location is the cytoplasm. It localises to the cell membrane. The enzyme catalyses Strict requirement for an Asp residue at position P1 and has a preferred cleavage sequence of Tyr-Val-Ala-Asp-|-.. Functionally, thiol protease involved in a variety of inflammatory processes by proteolytically cleaving other proteins, such as the precursors of the inflammatory cytokines interleukin-1 beta (IL1B) and interleukin 18 (IL18) as well as the pyroptosis inducer Gasdermin-D (GSDMD), into active mature peptides. Plays a key role in cell immunity as an inflammatory response initiator: once activated through formation of an inflammasome complex, it initiates a pro-inflammatory response through the cleavage of the two inflammatory cytokines IL1B and IL18, releasing the mature cytokines which are involved in a variety of inflammatory processes. Cleaves a tetrapeptide after an Asp residue at position P1. Also initiates pyroptosis, a programmed lytic cell death pathway, through cleavage of GSDMD. In contrast to cleavage of interleukin IL1B, recognition and cleavage of GSDMD is not strictly dependent on the consensus cleavage site but depends on an exosite interface on CASP1 that recognizes and binds the Gasdermin-D, C-terminal (GSDMD-CT) part. Cleaves and activates CASP7 in response to bacterial infection, promoting plasma membrane repair. Upon inflammasome activation, during DNA virus infection but not RNA virus challenge, controls antiviral immunity through the cleavage of CGAS, rendering it inactive. In apoptotic cells, cleaves SPHK2 which is released from cells and remains enzymatically active extracellularly. The polypeptide is Caspase-1 (Casp1) (Mus musculus (Mouse)).